Here is a 169-residue protein sequence, read N- to C-terminus: ATP synthase subunit b (169 aa).

A helical transmembrane segment spans residues 12–32 (PSVGLIFWKTVAFLIFLYILY). The disordered stretch occupies residues 69-107 (AENEEARREAEQKAQQILREARDSAEELREEEKAKTRRE). Over residues 87–107 (REARDSAEELREEEKAKTRRE) the composition is skewed to basic and acidic residues.

Belongs to the ATPase B chain family. As to quaternary structure, F-type ATPases have 2 components, F(1) - the catalytic core - and F(0) - the membrane proton channel. F(1) has five subunits: alpha(3), beta(3), gamma(1), delta(1), epsilon(1). F(0) has three main subunits: a(1), b(2) and c(10-14). The alpha and beta chains form an alternating ring which encloses part of the gamma chain. F(1) is attached to F(0) by a central stalk formed by the gamma and epsilon chains, while a peripheral stalk is formed by the delta and b chains.

It is found in the cell inner membrane. Functionally, f(1)F(0) ATP synthase produces ATP from ADP in the presence of a proton or sodium gradient. F-type ATPases consist of two structural domains, F(1) containing the extramembraneous catalytic core and F(0) containing the membrane proton channel, linked together by a central stalk and a peripheral stalk. During catalysis, ATP synthesis in the catalytic domain of F(1) is coupled via a rotary mechanism of the central stalk subunits to proton translocation. Component of the F(0) channel, it forms part of the peripheral stalk, linking F(1) to F(0). This is ATP synthase subunit b from Salinibacter ruber (strain DSM 13855 / M31).